The primary structure comprises 312 residues: MKVAVLGAAGGIGQALALLLKNQLPSGSELSLYDIAPVTPGVAVDLSHIPTAVKIKGFSGEDATPALEGADVVLISAGVARKPGMDRSDLFNVNAGIVKNLVQQIAKTCPKACVGIITNPVNTTVAIAAEVLKKAGVYDKNKLFGVTTLDIIRSNTFVAELKGKRPTEVEVPVIGGHSGVTILPLLSQIPGVSFTEQEAAELTKRIQNAGTEVVEAKAGGGSATLSMGQAAARFGLSLVRALQGEKGVVECAYVEGDGQYARFFSQPLLLGKNGVEERKSIGTLSAFEQHSLDAMLDTLKKDIQLGEDFINK.

Residues 7 to 13 (GAAGGIG) and Asp34 each bind NAD(+). Substrate contacts are provided by Arg81 and Arg87. NAD(+) is bound by residues Asn94 and 117 to 119 (ITN). Substrate is bound by residues Asn119 and Arg153. The Proton acceptor role is filled by His177. Met227 contacts NAD(+).

This sequence belongs to the LDH/MDH superfamily. MDH type 1 family. In terms of assembly, homodimer.

It carries out the reaction (S)-malate + NAD(+) = oxaloacetate + NADH + H(+). Catalyzes the reversible oxidation of malate to oxaloacetate. This Salmonella newport (strain SL254) protein is Malate dehydrogenase.